A 561-amino-acid chain; its full sequence is Dihydroxy-acid dehydratase (561 aa).

Cys50 provides a ligand contact to [2Fe-2S] cluster. Asp82 lines the Mg(2+) pocket. Cys123 is a binding site for [2Fe-2S] cluster. Residues Asp124 and Lys125 each contribute to the Mg(2+) site. Lys125 carries the post-translational modification N6-carboxylysine. Cys195 contributes to the [2Fe-2S] cluster binding site. Position 447 (Glu447) interacts with Mg(2+). The active-site Proton acceptor is the Ser473.

It belongs to the IlvD/Edd family. As to quaternary structure, homodimer. It depends on [2Fe-2S] cluster as a cofactor. Mg(2+) serves as cofactor.

The enzyme catalyses (2R)-2,3-dihydroxy-3-methylbutanoate = 3-methyl-2-oxobutanoate + H2O. It carries out the reaction (2R,3R)-2,3-dihydroxy-3-methylpentanoate = (S)-3-methyl-2-oxopentanoate + H2O. The protein operates within amino-acid biosynthesis; L-isoleucine biosynthesis; L-isoleucine from 2-oxobutanoate: step 3/4. It functions in the pathway amino-acid biosynthesis; L-valine biosynthesis; L-valine from pyruvate: step 3/4. Its function is as follows. Functions in the biosynthesis of branched-chain amino acids. Catalyzes the dehydration of (2R,3R)-2,3-dihydroxy-3-methylpentanoate (2,3-dihydroxy-3-methylvalerate) into 2-oxo-3-methylpentanoate (2-oxo-3-methylvalerate) and of (2R)-2,3-dihydroxy-3-methylbutanoate (2,3-dihydroxyisovalerate) into 2-oxo-3-methylbutanoate (2-oxoisovalerate), the penultimate precursor to L-isoleucine and L-valine, respectively. This chain is Dihydroxy-acid dehydratase, found in Trichodesmium erythraeum (strain IMS101).